Reading from the N-terminus, the 949-residue chain is Isoleucine--tRNA ligase (949 aa).

The short motif at 58 to 68 is the 'HIGH' region element; it reads PYANGDIHIGH. Position 567 (glutamate 567) interacts with L-isoleucyl-5'-AMP. The short motif at 608–612 is the 'KMSKS' region element; the sequence is KMSKS. Lysine 611 lines the ATP pocket. The Zn(2+) site is built by cysteine 912, cysteine 915, cysteine 932, and cysteine 935.

Belongs to the class-I aminoacyl-tRNA synthetase family. IleS type 1 subfamily. In terms of assembly, monomer. It depends on Zn(2+) as a cofactor.

The protein localises to the cytoplasm. The catalysed reaction is tRNA(Ile) + L-isoleucine + ATP = L-isoleucyl-tRNA(Ile) + AMP + diphosphate. Catalyzes the attachment of isoleucine to tRNA(Ile). As IleRS can inadvertently accommodate and process structurally similar amino acids such as valine, to avoid such errors it has two additional distinct tRNA(Ile)-dependent editing activities. One activity is designated as 'pretransfer' editing and involves the hydrolysis of activated Val-AMP. The other activity is designated 'posttransfer' editing and involves deacylation of mischarged Val-tRNA(Ile). The polypeptide is Isoleucine--tRNA ligase (Vibrio cholerae serotype O1 (strain ATCC 39315 / El Tor Inaba N16961)).